A 148-amino-acid chain; its full sequence is Large ribosomal subunit protein bL9 (148 aa).

This sequence belongs to the bacterial ribosomal protein bL9 family.

Functionally, binds to the 23S rRNA. This is Large ribosomal subunit protein bL9 from Parabacteroides distasonis (strain ATCC 8503 / DSM 20701 / CIP 104284 / JCM 5825 / NCTC 11152).